We begin with the raw amino-acid sequence, 318 residues long: Fe(3+) dicitrate transport system permease protein FecD (318 aa).

The Cytoplasmic portion of the chain corresponds to 1 to 2 (MK). Residues 3–23 (IALVIFITLALAGCALLSLHM) form a helical membrane-spanning segment. The Periplasmic portion of the chain corresponds to 24–55 (GVIPVPWRALLTDWQAGHEHYYVLMEYRLPRL). A helical transmembrane segment spans residues 56 to 76 (LLALFVGAALAVAGVLIQGIV). Residues 77-105 (RNPLASPDILGVNHAASLASVGALLLMPS) lie on the Cytoplasmic side of the membrane. Residues 106 to 126 (LPVMVLPLLAFAGGMAGLILL) traverse the membrane as a helical segment. Over 127–137 (KMLAKTHQPMK) the chain is Periplasmic. The chain crosses the membrane as a helical span at residues 138–158 (LALTGVALSACWASLTDYLML). At 159–179 (SRPQDVNNALLWLTGSLWGRD) the chain is on the cytoplasmic side. Residues 180 to 200 (WSFVKIAIPLMILFLPLSLSF) traverse the membrane as a helical segment. Residues 201–225 (CRDLDLLALGDARATTLGVSVPHTR) are Periplasmic-facing. The chain crosses the membrane as a helical span at residues 226–246 (FWALLLAVAMTSTGVAACGPI). Topologically, residues 247-269 (SFIGLVVPHMMRSITGGRHRRLL) are cytoplasmic. The helical transmembrane segment at 270–290 (PVSALTGALLLVVADLLARII) threads the bilayer. At 291–294 (HPPL) the chain is on the periplasmic side. Residues 295–315 (ELPVGVLTAIIGAPWFVWLLV) form a helical membrane-spanning segment. Over 316-318 (RMR) the chain is Cytoplasmic.

It belongs to the binding-protein-dependent transport system permease family. FecCD subfamily. As to quaternary structure, the complex is composed of two ATP-binding proteins (FecE), two transmembrane proteins (FecC and FecD) and a solute-binding protein (FecB). Interacts with FecB.

The protein resides in the cell inner membrane. In terms of biological role, part of the ABC transporter complex FecBCDE involved in citrate-dependent Fe(3+) uptake. Probably responsible for the translocation of the substrate across the membrane. The sequence is that of Fe(3+) dicitrate transport system permease protein FecD from Escherichia coli (strain K12).